A 527-amino-acid chain; its full sequence is SusD-like protein P25 (527 aa).

The first 15 residues, 1-15 (MKIQNIIVYVFLIFS), serve as a signal peptide directing secretion. Cysteine 16 carries the N-palmitoyl cysteine lipid modification. A lipid anchor (S-diacylglycerol cysteine) is attached at cysteine 16.

It belongs to the SusD family.

Its subcellular location is the cell outer membrane. Functionally, polysaccharide-binding protein probably involved in ulvan degradation. Ulvan is the main polysaccharide component of the Ulvales (green seaweed) cell wall. It is composed of disaccharide building blocks comprising 3-sulfated rhamnose (Rha3S) linked to D-glucuronic acid (GlcA), L-iduronic acid (IduA), or D-xylose (Xyl). The SusD-like protein may mediate ulvan oligomer-binding before transport in the periplasm for further degradation. This is SusD-like protein P25 from Formosa agariphila (strain DSM 15362 / KCTC 12365 / LMG 23005 / KMM 3901 / M-2Alg 35-1).